Reading from the N-terminus, the 287-residue chain is MSSIQSIQSRIKTVQSIRKITHAMELVSYSKLKKAKTAFDEVEKYNLLIDQTFNKIFENISHDDLKELMKSRNNSKSKLYIIVTSNLGLAGAYNANVIKLVKETVTSDDYLIIIGSYGVRALRQQYNEQIINLSDITTSKRTSTLVSKIIKRAFKYYRNGAVSSINFIYTKFINNLVQEELCEKVFPFDEQMIREHIDRKEIDYKLEFEPSAKDVLADAIPLFVDSKLHLAMATSLISEHSARRSAMENATRNSDSLITELDMEFKRKRQAKITNEIIEIVSGADAV.

This sequence belongs to the ATPase gamma chain family. F-type ATPases have 2 components, CF(1) - the catalytic core - and CF(0) - the membrane proton channel. CF(1) has five subunits: alpha(3), beta(3), gamma(1), delta(1), epsilon(1). CF(0) has three main subunits: a, b and c.

It localises to the cell membrane. Its function is as follows. Produces ATP from ADP in the presence of a proton gradient across the membrane. The gamma chain is believed to be important in regulating ATPase activity and the flow of protons through the CF(0) complex. This is ATP synthase gamma chain from Mycoplasmopsis agalactiae (strain NCTC 10123 / CIP 59.7 / PG2) (Mycoplasma agalactiae).